The primary structure comprises 201 residues: Recombination protein RecR (201 aa).

Residues 57–72 form a C4-type zinc finger; sequence CTHCRTFTEEESCAIC. The Toprim domain occupies 81–176; it reads GFLCVVEQPS…KVSRIAHGIP (96 aa).

Belongs to the RecR family.

Functionally, may play a role in DNA repair. It seems to be involved in an RecBC-independent recombinational process of DNA repair. It may act with RecF and RecO. This Histophilus somni (strain 129Pt) (Haemophilus somnus) protein is Recombination protein RecR.